The primary structure comprises 346 residues: Phosphoribosylformylglycinamidine cyclo-ligase (346 aa).

It belongs to the AIR synthase family.

The protein localises to the cytoplasm. It catalyses the reaction 2-formamido-N(1)-(5-O-phospho-beta-D-ribosyl)acetamidine + ATP = 5-amino-1-(5-phospho-beta-D-ribosyl)imidazole + ADP + phosphate + H(+). It participates in purine metabolism; IMP biosynthesis via de novo pathway; 5-amino-1-(5-phospho-D-ribosyl)imidazole from N(2)-formyl-N(1)-(5-phospho-D-ribosyl)glycinamide: step 2/2. The protein is Phosphoribosylformylglycinamidine cyclo-ligase of Bacillus cereus (strain G9842).